The following is a 334-amino-acid chain: MDYEDLKKRVWDLLAQNIESNYRVAVVVVGHPGSGKSTMAQRLKRDLNQEFQSHLKARRGGLRISAGIAAESLDETVPVASGALVEEARRGFFAHVEDPGFKPHKFYDGDGTAVIFGRGGLPNSVRIASEALDPASSVNIAEVVPMDGFHLSRAHLDHFADAAAAHKRRGAPWTFDSNNYLQLCKLLAATCKWKPAKRPKGETLMETICDTFAQCPVISYPGFDHAAKDPVRDQHVLTGFTRVLIFDGLYLLYDQENWAHIYHSLASTGAVLVVNVTASEETRETRVATRHFAAGLVGSIEEGVRKFRENDLLNAKLIEEHTLGGVPTLILSND.

30–38 is an ATP binding site; it reads GHPGSGKST.

The protein belongs to the YFH7 family.

Its function is as follows. ATP-dependent kinase that could be involved in endoplasmic reticulum membrane assembly. This Eremothecium gossypii (strain ATCC 10895 / CBS 109.51 / FGSC 9923 / NRRL Y-1056) (Yeast) protein is ATP-dependent kinase YFH7 (YFH7).